Here is a 564-residue protein sequence, read N- to C-terminus: Eukaryotic translation initiation factor 3 subunit L (564 aa).

The PCI domain occupies 331–537; the sequence is DAIRVFANIL…IHIADTKVAR (207 aa).

This sequence belongs to the eIF-3 subunit L family. Component of the eukaryotic translation initiation factor 3 (eIF-3) complex, which is composed of 13 subunits: EIF3A, EIF3B, EIF3C, EIF3D, EIF3E, EIF3F, EIF3G, EIF3H, EIF3I, EIF3J, EIF3K, EIF3L and EIF3M.

It localises to the cytoplasm. Functionally, component of the eukaryotic translation initiation factor 3 (eIF-3) complex, which is involved in protein synthesis of a specialized repertoire of mRNAs and, together with other initiation factors, stimulates binding of mRNA and methionyl-tRNAi to the 40S ribosome. The eIF-3 complex specifically targets and initiates translation of a subset of mRNAs involved in cell proliferation. This is Eukaryotic translation initiation factor 3 subunit L from Gallus gallus (Chicken).